Reading from the N-terminus, the 304-residue chain is Dihydroorotate dehydrogenase B (NAD(+)), catalytic subunit (304 aa).

FMN contacts are provided by residues S22 and 46–47 (KG). Substrate contacts are provided by residues K46 and 70-74 (NSIGL). FMN is bound by residues N100 and N128. N128 lines the substrate pocket. C131 functions as the Nucleophile in the catalytic mechanism. FMN-binding residues include K166 and I192. 193-194 (NT) provides a ligand contact to substrate. FMN is bound by residues G218, 244–245 (GG), and 266–267 (GT).

It belongs to the dihydroorotate dehydrogenase family. Type 1 subfamily. As to quaternary structure, heterotetramer of 2 PyrK and 2 PyrD type B subunits. However, the metal reductase complex seems to be composed of a heterooctamer of 4 PyrK and 4 PyrD subunits. It depends on FMN as a cofactor.

It localises to the cytoplasm. The enzyme catalyses (S)-dihydroorotate + NAD(+) = orotate + NADH + H(+). It functions in the pathway pyrimidine metabolism; UMP biosynthesis via de novo pathway; orotate from (S)-dihydroorotate (NAD(+) route): step 1/1. Catalyzes the conversion of dihydroorotate to orotate with NAD(+) as electron acceptor. In terms of biological role, together with PyrK, also forms a metal reductase complex able to reduce Fe(III)-chelates to Fe(II)-chelates, as well as soluble Cr(VI) and U(VI), using NADH as electron donor. To a lesser extent, can also use NADPH as an electron donor. Is unable to reduce riboflavin and FMN with NADH as electron donor. May have an in vivo role in metal reduction in D.reducens, which is an organism capable of reducing contaminant heavy metals and radionuclides. This Desulforamulus reducens (strain ATCC BAA-1160 / DSM 100696 / MI-1) (Desulfotomaculum reducens) protein is Dihydroorotate dehydrogenase B (NAD(+)), catalytic subunit (pyrD).